The sequence spans 51 residues: U-Asilidin(1)-Mar1a (51 aa).

Residues 1-23 (MANYIEVFSVLAIIFATVLAALA) form the signal peptide. Cystine bridges form between cysteine 26/cysteine 40, cysteine 33/cysteine 44, and cysteine 39/cysteine 49.

This sequence belongs to the asilidin-1 family. As to expression, expressed by the venom gland. Is the most highly expressed peptide and is around 3000 times higher expressed in the thoracic glands compared to its body tissues.

The protein resides in the secreted. In terms of biological role, induces neurotoxic effect on honeybees, including slow movements, disorientation and paralysis. Since it provokes similar symptoms than omega-atracotoxin, it is probable that it acts in the same way by inhibiting voltage-gated calcium channels. The chain is U-Asilidin(1)-Mar1a from Machimus arthriticus (Breck robberfly).